We begin with the raw amino-acid sequence, 370 residues long: Chloromuconate cycloisomerase (370 aa).

Lys-165 serves as the catalytic Proton acceptor. Mn(2+) is bound by residues Asp-194, Glu-220, and Asp-245. The active-site Proton donor is Glu-323.

Belongs to the mandelate racemase/muconate lactonizing enzyme family. Mn(2+) is required as a cofactor.

The enzyme catalyses 2-[(2R)-2-chloro-2,5-dihydro-5-oxofuryl]acetate = 3-chloro-cis,cis-muconate + H(+). It functions in the pathway aromatic compound metabolism; 3-chlorocatechol degradation. In Pseudomonas sp. (strain P51), this protein is Chloromuconate cycloisomerase (tcbD).